The following is a 199-amino-acid chain: DnaJ homolog subfamily C member 5B (199 aa).

Serine 14 and serine 16 each carry phosphoserine. The region spanning 19–84 is the J domain; it reads ALYEILGLHK…SKRNIYDKYG (66 aa).

In terms of assembly, interacts with the chaperone complex consisting of HSC70 and SGTA. Post-translationally, palmitoylated.

Its subcellular location is the membrane. In Sus scrofa (Pig), this protein is DnaJ homolog subfamily C member 5B (DNAJC5B).